Consider the following 542-residue polypeptide: Chaperonin GroEL (542 aa).

ATP is bound by residues 29–32 (TLGP), 86–90 (DGTTT), G413, 476–478 (NAA), and D492.

The protein belongs to the chaperonin (HSP60) family. Forms a cylinder of 14 subunits composed of two heptameric rings stacked back-to-back. Interacts with the co-chaperonin GroES.

The protein resides in the cytoplasm. The catalysed reaction is ATP + H2O + a folded polypeptide = ADP + phosphate + an unfolded polypeptide.. Its function is as follows. Together with its co-chaperonin GroES, plays an essential role in assisting protein folding. The GroEL-GroES system forms a nano-cage that allows encapsulation of the non-native substrate proteins and provides a physical environment optimized to promote and accelerate protein folding. The sequence is that of Chaperonin GroEL from Listeria welshimeri serovar 6b (strain ATCC 35897 / DSM 20650 / CCUG 15529 / CIP 8149 / NCTC 11857 / SLCC 5334 / V8).